The sequence spans 241 residues: Small ribosomal subunit protein eS4 (241 aa).

The S4 RNA-binding domain maps to 37 to 99 (IPLGLLLRDY…ADLYLRIVPD (63 aa)).

Belongs to the eukaryotic ribosomal protein eS4 family.

The polypeptide is Small ribosomal subunit protein eS4 (Metallosphaera sedula (strain ATCC 51363 / DSM 5348 / JCM 9185 / NBRC 15509 / TH2)).